A 186-amino-acid polypeptide reads, in one-letter code: Casparian strip membrane protein 3 (186 aa).

Residues methionine 1 to serine 26 lie on the Cytoplasmic side of the membrane. Residues isoleucine 27–methionine 47 traverse the membrane as a helical segment. Residues glycine 48–threonine 74 lie on the Extracellular side of the membrane. Asparagine 51 carries an N-linked (GlcNAc...) asparagine glycan. Residues phenylalanine 75–isoleucine 95 traverse the membrane as a helical segment. Over leucine 96 to arginine 107 the chain is Cytoplasmic. Residues isoleucine 108–alanine 128 form a helical membrane-spanning segment. Residues serine 129–serine 161 are Extracellular-facing. The helical transmembrane segment at leucine 162–alanine 182 threads the bilayer. Residues leucine 183 to cysteine 186 lie on the Cytoplasmic side of the membrane.

The protein belongs to the Casparian strip membrane proteins (CASP) family. In terms of assembly, homodimer and heterodimers.

It localises to the cell membrane. In terms of biological role, regulates membrane-cell wall junctions and localized cell wall deposition. Required for establishment of the Casparian strip membrane domain (CSD) and the subsequent formation of Casparian strips, a cell wall modification of the root endodermis that determines an apoplastic barrier between the intraorganismal apoplasm and the extraorganismal apoplasm and prevents lateral diffusion. The polypeptide is Casparian strip membrane protein 3 (Vitis vinifera (Grape)).